The primary structure comprises 90 residues: MAVKIRLTRMGSKKKPFYRINVADSRSPRDGRFIETVGTYNPLVAENQVTLKEDRVLTWLANGAQPSDTVRNILSKEGVLKKFHDSKFSK.

This sequence belongs to the bacterial ribosomal protein bS16 family.

The polypeptide is Small ribosomal subunit protein bS16 (Streptococcus pneumoniae serotype 19F (strain G54)).